A 78-amino-acid chain; its full sequence is Small ribosomal subunit protein bS18 (78 aa).

The protein belongs to the bacterial ribosomal protein bS18 family. Part of the 30S ribosomal subunit. Forms a tight heterodimer with protein bS6.

Functionally, binds as a heterodimer with protein bS6 to the central domain of the 16S rRNA, where it helps stabilize the platform of the 30S subunit. This chain is Small ribosomal subunit protein bS18, found in Rhodospirillum rubrum (strain ATCC 11170 / ATH 1.1.1 / DSM 467 / LMG 4362 / NCIMB 8255 / S1).